The primary structure comprises 392 residues: Immunoglobulin-binding protein EibA (392 aa).

The N-terminal stretch at 1–27 (MSKKFTKAVLSAAMAGVLFGVSFDIMA) is a signal peptide. Positions 28–301 (AEQSYSALNA…IAANTRTLQQ (274 aa)) are surface exposed passenger domain. Topologically, residues 28 to 341 (AEQSYSALNA…GLFQPYSVGK (314 aa)) are extracellular. Residues 174–215 (ESANSTIVANELEAQKGKLDAQKGELEAQKKNLGELTTRTDK) adopt a coiled-coil conformation. Residues 187-230 (AQKGKLDAQKGELEAQKKNLGELTTRTDKIDAAAAATAAKVESR) form a right-handed coiled-coil (RHcc) region. The interval 231–256 (TLVGVSSDGTLTRAEGAKNTISVNDG) is saddle domain. Residues 257-322 (LVALSGRTDR…INENHKEMKR (66 aa)) are left-handed coiled-coil (LHcc). An outer membrane translocation of the passenger domain region spans residues 299–341 (LQQHSARLDSQQRQINENHKEMKRAAAQSAALTGLFQPYSVGK). The next 4 beta stranded transmembrane spans lie at 342–352 (FNASAAVGGYS), 355–366 (QALAVGVGYRFN), 369–378 (TAAKAGVAFS), and 382–392 (ASWNVGVNFEF). Residues 342–392 (FNASAAVGGYSDEQALAVGVGYRFNEQTAAKAGVAFSDGDASWNVGVNFEF) form a translocator domain region.

It belongs to the autotransporter-2 (AT-2) (TC 1.B.40) family. Eib subfamily. In terms of assembly, homotrimer; can probably form mixed heterotrimers in vivo. Will form mixed heterotrimers with EibD; these are correctly located in the outer membrane and bind IgG Fc, although less well than homotrimers. Does not form trimers with distantly related YadA from Y.enterocolitica; coexpression was lethal and one of the genes is eliminated in vivo. If the full translocator domain (299-392) is exchanged with that of YadA ('368-455'), will form heterotrimers with YadA and vice-versa. In denaturing gels runs as 2 bands of about 121 and 131 kDa; extracting the sample with 88% phenol at 70 degrees Celsius reduces part of the signal to about 45 kDa. Binds the Fc portion of IgG; binds more than 1 Fc per subunit.

Its subcellular location is the cell surface. It is found in the cell outer membrane. In terms of biological role, binds (in a non-immune fashion) to the Fc portion of human IgG but not IgA; binding occurs on the cell surface. Confers the ability to survive exposure to human serum exposure. Binds to the Fc portion of human IgG and to whole mouse antibodies also via Fc, binds more than 1 Fc or IgG. The chain is Immunoglobulin-binding protein EibA from Escherichia coli.